The primary structure comprises 170 residues: Probable inosine/xanthosine triphosphatase (170 aa).

Glu31 provides a ligand contact to Mg(2+).

The protein belongs to the YjjX NTPase family. In terms of assembly, homodimer. Mg(2+) is required as a cofactor. The cofactor is Mn(2+).

It carries out the reaction XTP + H2O = XDP + phosphate + H(+). The enzyme catalyses ITP + H2O = IDP + phosphate + H(+). Its function is as follows. Phosphatase that hydrolyzes non-canonical purine nucleotides such as XTP and ITP to their respective diphosphate derivatives. Probably excludes non-canonical purines from DNA/RNA precursor pool, thus preventing their incorporation into DNA/RNA and avoiding chromosomal lesions. In Oceanobacillus iheyensis (strain DSM 14371 / CIP 107618 / JCM 11309 / KCTC 3954 / HTE831), this protein is Probable inosine/xanthosine triphosphatase.